Here is a 459-residue protein sequence, read N- to C-terminus: Zinc finger protein ZFP2 (459 aa).

C2H2-type zinc fingers lie at residues 100–122 (YGCD…QRIH), 128–150 (YTCN…QRTH), 156–178 (YKCH…QRTH), 184–206 (YQCK…ERIH), 212–234 (YKCH…QRTH), 240–262 (YECN…QRSH), 268–290 (YECS…QRNH), 296–318 (YKCN…QRLH), 324–346 (FECN…RRIH), 352–374 (YECM…QVIH), 380–402 (YECT…QRIH), 408–430 (YECD…QRIH), and 436–458 (YQCN…QRTH).

This sequence belongs to the krueppel C2H2-type zinc-finger protein family.

It is found in the nucleus. Functionally, probable transcription factor involved in neuronal differentiation and/or phenotypic maintenance. This is Zinc finger protein ZFP2 (Zfp2) from Mus musculus (Mouse).